Here is a 634-residue protein sequence, read N- to C-terminus: MMEVRPTTLIDHINSPADLRALKPEQLPQVCRELRRYILEVLSVTPGHLGSSLGAVDFTVALHYVFDTPYDRIVWDVGHQAYSHKILTGRREDFRHLRQWGGISGFPSPKESEYDTFPAGHASNSISAALGMAVASAAKDEKRKVIAVIGDGSMTGGMAFEGLNNASSFPNNLLIILNDNNMSIDRNVGGLNRYMVDILTSKTYNTIRYDLYKGLRKINLISETNRKNLLRFNNSFKALLARESNLFEGFSIRYFGPVDGNNVLRLVEVLNQIKDMAGPKILHLRTIKGKGYSPAEKQATIWHAPGEFDIKSGERKKGENKPEPPKFQDVFGHTLVELADRDERVVGVTPAMPTGCSMTFLMKKYPNRAYDVGIAEGHAVTFSAGLAKEGLIPFCNIYSSFIQRGYDQVIHDVALSGSHVVICLDRAGLVGEDGATHHGVFDMAFLRCVPDIVVASPLNEHELRNLMLTAYKGYDGPMVIRYPRGKGVLTDWRNTPRLVEIARGRCLTEGEAIAFLSIGPIGNMVQKVVERLAEKGVSAAHYDMVFLKPLDEEMLHGIAKKFDTIISVEDGCIQGGFGSAVMEFMADHDYHPRIRRVGVPDRFIGQGSVPEQYADCGMDADSLLHLTEELLLHP.

Residues histidine 79 and glycine 120 to alanine 122 each bind thiamine diphosphate. Aspartate 151 lines the Mg(2+) pocket. Thiamine diphosphate is bound by residues glycine 152 to serine 153, asparagine 180, tyrosine 292, and glutamate 376. Residue asparagine 180 coordinates Mg(2+).

This sequence belongs to the transketolase family. DXPS subfamily. Homodimer. Requires Mg(2+) as cofactor. It depends on thiamine diphosphate as a cofactor.

The catalysed reaction is D-glyceraldehyde 3-phosphate + pyruvate + H(+) = 1-deoxy-D-xylulose 5-phosphate + CO2. Its pathway is metabolic intermediate biosynthesis; 1-deoxy-D-xylulose 5-phosphate biosynthesis; 1-deoxy-D-xylulose 5-phosphate from D-glyceraldehyde 3-phosphate and pyruvate: step 1/1. In terms of biological role, catalyzes the acyloin condensation reaction between C atoms 2 and 3 of pyruvate and glyceraldehyde 3-phosphate to yield 1-deoxy-D-xylulose-5-phosphate (DXP). The sequence is that of 1-deoxy-D-xylulose-5-phosphate synthase from Porphyromonas gingivalis (strain ATCC BAA-308 / W83).